Here is a 434-residue protein sequence, read N- to C-terminus: Serine hydroxymethyltransferase 1 (434 aa).

Residues L136 and 140-142 (GHL) contribute to the (6S)-5,6,7,8-tetrahydrofolate site. K245 carries the N6-(pyridoxal phosphate)lysine modification.

The protein belongs to the SHMT family. As to quaternary structure, homodimer. Requires pyridoxal 5'-phosphate as cofactor.

It is found in the cytoplasm. The enzyme catalyses (6R)-5,10-methylene-5,6,7,8-tetrahydrofolate + glycine + H2O = (6S)-5,6,7,8-tetrahydrofolate + L-serine. It functions in the pathway one-carbon metabolism; tetrahydrofolate interconversion. The protein operates within amino-acid biosynthesis; glycine biosynthesis; glycine from L-serine: step 1/1. Catalyzes the reversible interconversion of serine and glycine with tetrahydrofolate (THF) serving as the one-carbon carrier. This reaction serves as the major source of one-carbon groups required for the biosynthesis of purines, thymidylate, methionine, and other important biomolecules. Also exhibits THF-independent aldolase activity toward beta-hydroxyamino acids, producing glycine and aldehydes, via a retro-aldol mechanism. In Rhodospirillum rubrum (strain ATCC 11170 / ATH 1.1.1 / DSM 467 / LMG 4362 / NCIMB 8255 / S1), this protein is Serine hydroxymethyltransferase 1.